A 30-amino-acid polypeptide reads, in one-letter code: Dicynthaurin (30 aa).

Thr30 carries the post-translational modification Threonine amide.

In terms of assembly, homodimer.

Its subcellular location is the secreted. Its function is as follows. Shows antibacterial activity against both Gram-positive and Gram-negative bacteria. Its antimicrobial activity is optimal at NaCl concentrations below 100 mM, suggesting that the antimicrobial actions of this peptide may take place intracellularly rather than extracellularly. Has no activity against the fungus C.albicans. Has modest hemolytic activity. The protein is Dicynthaurin of Halocynthia aurantium (Sea peach).